A 313-amino-acid chain; its full sequence is Mitochondrial uncoupling protein 4 (313 aa).

3 Solcar repeats span residues 4–115 (KSFV…LKNK), 124–215 (LNLS…FKEG), and 224–309 (DGLG…VRKL). Transmembrane regions (helical) follow at residues 6-26 (FVEGGIASVIAGCSTHPLDLI), 84-104 (AAALFSGVSATLLRQTLYSTT), 130-150 (IGAGLVAGGIGAAVGNPADVA), 189-209 (RGSALTINRAMIVTAAQLASY), 230-250 (VVASFAAGFVASVASNPVDVI), and 282-302 (YKGFVPTVCRQGPFTVVLFVT).

This sequence belongs to the mitochondrial carrier (TC 2.A.29) family. Expressed in roots, leaves, stems and flowers.

It localises to the mitochondrion inner membrane. Functionally, PUMPS are mitochondrial transporter proteins that create proton leaks across the inner mitochondrial membrane, thus uncoupling oxidative phosphorylation. This leads to a decrease in the efficiency of oxidative phosphorylation and an increase in heat production. May be involved in protecting plant cells against oxidative stress damage. Recombinant PUMP4, reconstituted into liposomes, transports a wide range of dicarboxylic acids including malate, oxaloacetate and succinate as well as phosphate, sulfate and thiosulfate. However, it is unknown if these transports are of any biological significance in vivo. The chain is Mitochondrial uncoupling protein 4 (PUMP4) from Arabidopsis thaliana (Mouse-ear cress).